The primary structure comprises 322 residues: tRNA U34 carboxymethyltransferase (322 aa).

Carboxy-S-adenosyl-L-methionine contacts are provided by residues K92, W106, K111, G131, 153–155 (DPT), 181–182 (VE), M196, Y200, and R315.

This sequence belongs to the class I-like SAM-binding methyltransferase superfamily. CmoB family. In terms of assembly, homotetramer.

The enzyme catalyses carboxy-S-adenosyl-L-methionine + 5-hydroxyuridine(34) in tRNA = 5-carboxymethoxyuridine(34) in tRNA + S-adenosyl-L-homocysteine + H(+). Functionally, catalyzes carboxymethyl transfer from carboxy-S-adenosyl-L-methionine (Cx-SAM) to 5-hydroxyuridine (ho5U) to form 5-carboxymethoxyuridine (cmo5U) at position 34 in tRNAs. In Colwellia psychrerythraea (strain 34H / ATCC BAA-681) (Vibrio psychroerythus), this protein is tRNA U34 carboxymethyltransferase.